A 385-amino-acid polypeptide reads, in one-letter code: S-adenosylmethionine synthase (385 aa).

His16 provides a ligand contact to ATP. Residue Asp18 participates in Mg(2+) binding. Glu44 is a K(+) binding site. Residues Glu57 and Gln100 each coordinate L-methionine. Positions 100-110 (QSPDINQGVDR) are flexible loop. ATP-binding positions include 164-166 (DGK), 230-231 (KF), Asp239, 245-246 (RK), Ala262, and Lys266. Residue Asp239 participates in L-methionine binding. Lys270 is an L-methionine binding site.

The protein belongs to the AdoMet synthase family. Homotetramer; dimer of dimers. Requires Mg(2+) as cofactor. K(+) serves as cofactor.

It localises to the cytoplasm. The catalysed reaction is L-methionine + ATP + H2O = S-adenosyl-L-methionine + phosphate + diphosphate. The protein operates within amino-acid biosynthesis; S-adenosyl-L-methionine biosynthesis; S-adenosyl-L-methionine from L-methionine: step 1/1. In terms of biological role, catalyzes the formation of S-adenosylmethionine (AdoMet) from methionine and ATP. The overall synthetic reaction is composed of two sequential steps, AdoMet formation and the subsequent tripolyphosphate hydrolysis which occurs prior to release of AdoMet from the enzyme. This Helicobacter acinonychis (strain Sheeba) protein is S-adenosylmethionine synthase.